The chain runs to 476 residues: Argininosuccinate lyase (476 aa).

Belongs to the lyase 1 family. Argininosuccinate lyase subfamily.

It is found in the cytoplasm. It catalyses the reaction 2-(N(omega)-L-arginino)succinate = fumarate + L-arginine. The protein operates within amino-acid biosynthesis; L-arginine biosynthesis; L-arginine from L-ornithine and carbamoyl phosphate: step 3/3. This Acaryochloris marina (strain MBIC 11017) protein is Argininosuccinate lyase.